A 282-amino-acid polypeptide reads, in one-letter code: Bifunctional protein FolD (282 aa).

NADP(+) contacts are provided by residues Gly-164 to Ser-166, Ile-189, and Ile-230.

It belongs to the tetrahydrofolate dehydrogenase/cyclohydrolase family. Homodimer.

It catalyses the reaction (6R)-5,10-methylene-5,6,7,8-tetrahydrofolate + NADP(+) = (6R)-5,10-methenyltetrahydrofolate + NADPH. The enzyme catalyses (6R)-5,10-methenyltetrahydrofolate + H2O = (6R)-10-formyltetrahydrofolate + H(+). Its pathway is one-carbon metabolism; tetrahydrofolate interconversion. In terms of biological role, catalyzes the oxidation of 5,10-methylenetetrahydrofolate to 5,10-methenyltetrahydrofolate and then the hydrolysis of 5,10-methenyltetrahydrofolate to 10-formyltetrahydrofolate. In Campylobacter jejuni subsp. jejuni serotype O:2 (strain ATCC 700819 / NCTC 11168), this protein is Bifunctional protein FolD.